The sequence spans 199 residues: Large ribosomal subunit protein eL13A (199 aa).

Phosphothreonine is present on residues Thr-144 and Thr-152.

It belongs to the eukaryotic ribosomal protein eL13 family. Component of the large ribosomal subunit (LSU). Mature yeast ribosomes consist of a small (40S) and a large (60S) subunit. The 40S small subunit contains 1 molecule of ribosomal RNA (18S rRNA) and 33 different proteins (encoded by 57 genes). The large 60S subunit contains 3 rRNA molecules (25S, 5.8S and 5S rRNA) and 46 different proteins (encoded by 81 genes).

It is found in the cytoplasm. Component of the ribosome, a large ribonucleoprotein complex responsible for the synthesis of proteins in the cell. The small ribosomal subunit (SSU) binds messenger RNAs (mRNAs) and translates the encoded message by selecting cognate aminoacyl-transfer RNA (tRNA) molecules. The large subunit (LSU) contains the ribosomal catalytic site termed the peptidyl transferase center (PTC), which catalyzes the formation of peptide bonds, thereby polymerizing the amino acids delivered by tRNAs into a polypeptide chain. The nascent polypeptides leave the ribosome through a tunnel in the LSU and interact with protein factors that function in enzymatic processing, targeting, and the membrane insertion of nascent chains at the exit of the ribosomal tunnel. In Saccharomyces cerevisiae (strain ATCC 204508 / S288c) (Baker's yeast), this protein is Large ribosomal subunit protein eL13A.